A 241-amino-acid polypeptide reads, in one-letter code: Trypsin-10 (241 aa).

An N-terminal signal peptide occupies residues 1–13 (MKSLIFVLLLGAV). A propeptide spans 14 to 19 (FAEEDK) (activation peptide). The Peptidase S1 domain occupies 20-239 (IVGGYECTRH…LSGWVRDTMA (220 aa)). Cystine bridges form between C26-C155, C44-C60, C128-C228, C135-C201, C166-C180, and C191-C215. Catalysis depends on charge relay system residues H59 and D103. S195 acts as the Charge relay system in catalysis.

It belongs to the peptidase S1 family.

The protein localises to the secreted. It localises to the extracellular space. The enzyme catalyses Preferential cleavage: Arg-|-Xaa, Lys-|-Xaa.. The polypeptide is Trypsin-10 (Gadus morhua (Atlantic cod)).